A 543-amino-acid polypeptide reads, in one-letter code: Zinc metalloproteinase (543 aa).

Residues 1 to 24 (MHPNYYLSPLAVAIALGIASPVKA) form the signal peptide. The propeptide occupies 25–207 (ADPIPLQKSS…PFVQWDDVKT (183 aa)). Zn(2+) is bound at residue histidine 377. Glutamate 378 is a catalytic residue. Zn(2+) is bound by residues histidine 381 and glutamate 401. Histidine 463 functions as the Proton donor in the catalytic mechanism.

This sequence belongs to the peptidase M4 family. Zn(2+) is required as a cofactor.

The protein resides in the secreted. Functionally, cleaves collagen, gelatin, casein, alpha-1-antitrypsin, and bovine insulin. May play a role in the pathogenesis of legionnaires disease. In Legionella pneumophila, this protein is Zinc metalloproteinase.